The following is a 397-amino-acid chain: Acetate kinase (397 aa).

Asn7 contributes to the Mg(2+) binding site. ATP is bound at residue Lys14. Arg88 is a substrate binding site. The active-site Proton donor/acceptor is the Asp145. Residues 205 to 209, 279 to 281, and 326 to 330 each bind ATP; these read HLGNG, DMR, and GIGEN. Glu380 lines the Mg(2+) pocket.

This sequence belongs to the acetokinase family. Homodimer. It depends on Mg(2+) as a cofactor. Mn(2+) is required as a cofactor.

The protein localises to the cytoplasm. The enzyme catalyses acetate + ATP = acetyl phosphate + ADP. It functions in the pathway metabolic intermediate biosynthesis; acetyl-CoA biosynthesis; acetyl-CoA from acetate: step 1/2. Its function is as follows. Catalyzes the formation of acetyl phosphate from acetate and ATP. Can also catalyze the reverse reaction. The protein is Acetate kinase of Campylobacter concisus (strain 13826).